The chain runs to 466 residues: Ribulose bisphosphate carboxylase large chain (466 aa).

Position 4 is an N6,N6,N6-trimethyllysine (Lys4). 2 residues coordinate substrate: Asn113 and Thr163. Lys165 acts as the Proton acceptor in catalysis. Residue Lys167 participates in substrate binding. Residues Lys191, Asp193, and Glu194 each coordinate Mg(2+). The residue at position 191 (Lys191) is an N6-carboxylysine. Catalysis depends on His284, which acts as the Proton acceptor. Arg285, His317, and Ser369 together coordinate substrate.

It belongs to the RuBisCO large chain family. Type I subfamily. Heterohexadecamer of 8 large chains and 8 small chains; disulfide-linked. The disulfide link is formed within the large subunit homodimers. The cofactor is Mg(2+). Post-translationally, the disulfide bond which can form in the large chain dimeric partners within the hexadecamer appears to be associated with oxidative stress and protein turnover.

It localises to the plastid. Its subcellular location is the chloroplast. It carries out the reaction 2 (2R)-3-phosphoglycerate + 2 H(+) = D-ribulose 1,5-bisphosphate + CO2 + H2O. The catalysed reaction is D-ribulose 1,5-bisphosphate + O2 = 2-phosphoglycolate + (2R)-3-phosphoglycerate + 2 H(+). RuBisCO catalyzes two reactions: the carboxylation of D-ribulose 1,5-bisphosphate, the primary event in carbon dioxide fixation, as well as the oxidative fragmentation of the pentose substrate in the photorespiration process. Both reactions occur simultaneously and in competition at the same active site. In Nelsonia canescens (Blue pussyleaf), this protein is Ribulose bisphosphate carboxylase large chain.